The primary structure comprises 611 residues: MAU2 chromatid cohesion factor homolog (611 aa).

TPR repeat units lie at residues 11–46 (YAGL…NPPP), 91–124 (FEAS…TSGE), 131–164 (FRLF…AEQC), 371–404 (PILH…ADNP), and 490–523 (ACSL…SGKI). The segment at 581–611 (WTGAVSPTKSSTIPPQQSFQTWSQPGPSRLS) is disordered. The segment covering 585–611 (VSPTKSSTIPPQQSFQTWSQPGPSRLS) has biased composition (polar residues).

This sequence belongs to the SCC4/mau-2 family. As to quaternary structure, component of the cohesin loading complex.

It localises to the nucleus. Its subcellular location is the nucleoplasm. Functionally, required for association of the cohesin complex with chromatin during interphase. Plays a role in sister chromatid cohesion and normal progression through prometaphase. This Nematostella vectensis (Starlet sea anemone) protein is MAU2 chromatid cohesion factor homolog.